A 235-amino-acid chain; its full sequence is U1 small nuclear ribonucleoprotein C (235 aa).

The Matrin-type zinc-finger motif lies at 4–36; it reads YYCEYCDIYLTHSSPVGRRQHIHGRKHISAKIE. Positions 131-235 are disordered; sequence QAHNNYSYPN…SKEHIESDIS (105 aa). Low complexity predominate over residues 134–168; it reads NNYSYPNSINPSNQINYSNNYGSNNFNNSNEFNKN. The span at 169-189 shows a compositional bias: basic and acidic residues; that stretch reads MNEKDNINNNDIHDNKVKTDE. The span at 192-203 shows a compositional bias: low complexity; it reads PINNDNLNNTRN. Composition is skewed to basic and acidic residues over residues 205–217 and 225–235; these read SYEENHYSTDHKK and NSKEHIESDIS.

This sequence belongs to the U1 small nuclear ribonucleoprotein C family. In terms of assembly, U1 snRNP is composed of the 7 core Sm proteins B/B', D1, D2, D3, E, F and G that assemble in a heptameric protein ring on the Sm site of the small nuclear RNA to form the core snRNP, and at least 3 U1 snRNP-specific proteins U1-70K, U1-A and U1-C. U1-C interacts with U1 snRNA and the 5' splice-site region of the pre-mRNA.

The protein localises to the nucleus. In terms of biological role, component of the spliceosomal U1 snRNP, which is essential for recognition of the pre-mRNA 5' splice-site and the subsequent assembly of the spliceosome. U1-C is directly involved in initial 5' splice-site recognition for both constitutive and regulated alternative splicing. The interaction with the 5' splice-site seems to precede base-pairing between the pre-mRNA and the U1 snRNA. Stimulates commitment or early (E) complex formation by stabilizing the base pairing of the 5' end of the U1 snRNA and the 5' splice-site region. The chain is U1 small nuclear ribonucleoprotein C from Plasmodium falciparum (isolate 3D7).